The following is a 367-amino-acid chain: Probable butyrate kinase (367 aa).

It belongs to the acetokinase family.

It is found in the cytoplasm. It carries out the reaction butanoate + ATP = butanoyl phosphate + ADP. This chain is Probable butyrate kinase, found in Bacillus anthracis (strain A0248).